The primary structure comprises 647 residues: Macrolide export ATP-binding/permease protein MacB (647 aa).

Residues 5–243 (LELKGIERSY…TQTPSLTSKI (239 aa)) enclose the ABC transporter domain. 41 to 48 (GASGSGKS) is a binding site for ATP. 4 consecutive transmembrane segments (helical) span residues 272 to 292 (LLTM…LVIG), 522 to 542 (LFLT…VMNI), 576 to 596 (ILVC…IAFI), and 610 to 630 (PIAL…FGFL).

It belongs to the ABC transporter superfamily. Macrolide exporter (TC 3.A.1.122) family. Homodimer. Part of the tripartite efflux system MacAB-TolC, which is composed of an inner membrane transporter, MacB, a periplasmic membrane fusion protein, MacA, and an outer membrane component, TolC. The complex forms a large protein conduit and can translocate molecules across both the inner and outer membranes. Interacts with MacA.

Its subcellular location is the cell inner membrane. Functionally, part of the tripartite efflux system MacAB-TolC. MacB is a non-canonical ABC transporter that contains transmembrane domains (TMD), which form a pore in the inner membrane, and an ATP-binding domain (NBD), which is responsible for energy generation. Confers resistance against macrolides. This chain is Macrolide export ATP-binding/permease protein MacB, found in Photorhabdus laumondii subsp. laumondii (strain DSM 15139 / CIP 105565 / TT01) (Photorhabdus luminescens subsp. laumondii).